Here is a 274-residue protein sequence, read N- to C-terminus: Thiamine kinase (274 aa).

It belongs to the thiamine kinase family.

The enzyme catalyses thiamine + ATP = thiamine phosphate + ADP + H(+). It participates in cofactor biosynthesis; thiamine diphosphate biosynthesis; thiamine phosphate from thiamine: step 1/1. In terms of biological role, catalyzes the ATP-dependent phosphorylation of thiamine to thiamine phosphate. Is involved in thiamine salvage. The sequence is that of Thiamine kinase from Escherichia coli O139:H28 (strain E24377A / ETEC).